The primary structure comprises 253 residues: Tetraspanin-11 (253 aa).

Transmembrane regions (helical) follow at residues 19–39 (LLFV…AVGI), 63–83 (ILIF…GAIL), and 93–113 (YFCL…LAHV). Asn-127 carries an N-linked (GlcNAc...) asparagine glycan. The helical transmembrane segment at 220–240 (LLLMGAVGIGVACLQICGMVL) threads the bilayer.

This sequence belongs to the tetraspanin (TM4SF) family.

It is found in the membrane. The chain is Tetraspanin-11 (TSPAN11) from Homo sapiens (Human).